Consider the following 341-residue polypeptide: DNA repair protein XRCC3 (341 aa).

The residue at position 1 (Met-1) is an N-acetylmethionine. 107-114 (GRSSAGKT) contributes to the ATP binding site.

Belongs to the RecA family. RAD51 subfamily. In terms of assembly, interacts with RAD51C and RAD51. Part of the CX3 complex consisting of RAD51C and XRCC3; the complex has a ring-like structure arranged into a flat disc around a central channel; CX3 can interact with RAD51 in vitro. Forms a complex with FANCD2, BRCA2 and phosphorylated FANCG. Interacts with SWSAP1 and ZSWIM7; involved in homologous recombination repair. Interacts directly with PALB2 which may serve as a scaffold for a HR complex containing PALB2, BRCA2, RAD51C, RAD51 and XRCC3.

Its subcellular location is the nucleus. The protein resides in the cytoplasm. The protein localises to the perinuclear region. It is found in the mitochondrion matrix. Its function is as follows. Involved in the homologous recombination repair (HRR) pathway of double-stranded DNA, thought to repair chromosomal fragmentation, translocations and deletions. Part of the RAD21 paralog protein complex CX3 which acts in the BRCA1-BRCA2-dependent HR pathway. Upon DNA damage, CX3 acts downstream of RAD51 recruitment; the complex binds predominantly to the intersection of the four duplex arms of the Holliday junction (HJ) and to junctions of replication forks. Involved in HJ resolution and thus in processing HR intermediates late in the DNA repair process; the function may be linked to the CX3 complex and seems to involve GEN1 during mitotic cell cycle progression. Part of a PALB2-scaffolded HR complex containing BRCA2 and RAD51C and which is thought to play a role in DNA repair by HR. Plays a role in regulating mitochondrial DNA copy number under conditions of oxidative stress in the presence of RAD51 and RAD51C. The polypeptide is DNA repair protein XRCC3 (XRCC3) (Bos taurus (Bovine)).